The sequence spans 202 residues: Xanthine phosphoribosyltransferase (202 aa).

Xanthine-binding residues include Leu-20 and Asn-27. 128–132 (ANGEA) lines the 5-phospho-alpha-D-ribose 1-diphosphate pocket. Lys-156 contacts xanthine.

Belongs to the purine/pyrimidine phosphoribosyltransferase family. Xpt subfamily. Homodimer.

The protein localises to the cytoplasm. It catalyses the reaction XMP + diphosphate = xanthine + 5-phospho-alpha-D-ribose 1-diphosphate. Its pathway is purine metabolism; XMP biosynthesis via salvage pathway; XMP from xanthine: step 1/1. Converts the preformed base xanthine, a product of nucleic acid breakdown, to xanthosine 5'-monophosphate (XMP), so it can be reused for RNA or DNA synthesis. The chain is Xanthine phosphoribosyltransferase from Alkaliphilus metalliredigens (strain QYMF).